Here is a 520-residue protein sequence, read N- to C-terminus: Type I restriction enzyme EcoprrI methylase subunit (520 aa).

S-adenosyl-L-methionine is bound by residues 198-203 (EFFTPQ), 230-232 (SGS), and E254.

Belongs to the N(4)/N(6)-methyltransferase family. As to quaternary structure, the type I restriction/modification system is composed of three polypeptides R, M and S; the restriction enzyme has stoichiometry R(2)M(2)S(1) while the methyltransferase is M(2)S(1).

It carries out the reaction a 2'-deoxyadenosine in DNA + S-adenosyl-L-methionine = an N(6)-methyl-2'-deoxyadenosine in DNA + S-adenosyl-L-homocysteine + H(+). Its function is as follows. The subtype gamma methyltransferase (M) subunit of a type I restriction enzyme. The M and S subunits together form a methyltransferase (MTase) that methylates two adenine residues of the sequence 5'-CCAN(7)ATGC-3'. In the presence of the R subunit the complex can also act as an endonuclease, binding to the same target sequence but cutting the DNA some distance from this site. Whether the DNA is cut or modified depends on the methylation state of the target sequence. When the target site is unmodified, the DNA is cut. When the target site is hemimethylated, the complex acts as a maintenance MTase modifying the DNA so that both strands become methylated. After locating a non-methylated recognition site, the enzyme complex serves as a molecular motor that translocates DNA in an ATP-dependent manner until a collision occurs that triggers cleavage. The chain is Type I restriction enzyme EcoprrI methylase subunit from Escherichia coli.